We begin with the raw amino-acid sequence, 411 residues long: Serine hydroxymethyltransferase (411 aa).

(6S)-5,6,7,8-tetrahydrofolate-binding positions include Leu117 and Gly121–Leu123. Residue Lys226 is modified to N6-(pyridoxal phosphate)lysine.

It belongs to the SHMT family. In terms of assembly, homodimer. Requires pyridoxal 5'-phosphate as cofactor.

It localises to the cytoplasm. The catalysed reaction is (6R)-5,10-methylene-5,6,7,8-tetrahydrofolate + glycine + H2O = (6S)-5,6,7,8-tetrahydrofolate + L-serine. It functions in the pathway one-carbon metabolism; tetrahydrofolate interconversion. It participates in amino-acid biosynthesis; glycine biosynthesis; glycine from L-serine: step 1/1. Functionally, catalyzes the reversible interconversion of serine and glycine with tetrahydrofolate (THF) serving as the one-carbon carrier. This reaction serves as the major source of one-carbon groups required for the biosynthesis of purines, thymidylate, methionine, and other important biomolecules. Also exhibits THF-independent aldolase activity toward beta-hydroxyamino acids, producing glycine and aldehydes, via a retro-aldol mechanism. This Syntrophobacter fumaroxidans (strain DSM 10017 / MPOB) protein is Serine hydroxymethyltransferase.